Reading from the N-terminus, the 229-residue chain is Enolase-phosphatase E1 (229 aa).

Over residues 208-218 (DTQSTHRQVSS) the composition is skewed to polar residues. The segment at 208–229 (DTQSTHRQVSSFDDIHPEQIPT) is disordered. Residues 220 to 229 (DDIHPEQIPT) are compositionally biased toward basic and acidic residues.

This sequence belongs to the HAD-like hydrolase superfamily. MasA/MtnC family. As to quaternary structure, monomer. Mg(2+) serves as cofactor.

It carries out the reaction 5-methylsulfanyl-2,3-dioxopentyl phosphate + H2O = 1,2-dihydroxy-5-(methylsulfanyl)pent-1-en-3-one + phosphate. It functions in the pathway amino-acid biosynthesis; L-methionine biosynthesis via salvage pathway; L-methionine from S-methyl-5-thio-alpha-D-ribose 1-phosphate: step 3/6. Its pathway is amino-acid biosynthesis; L-methionine biosynthesis via salvage pathway; L-methionine from S-methyl-5-thio-alpha-D-ribose 1-phosphate: step 4/6. Functionally, bifunctional enzyme that catalyzes the enolization of 2,3-diketo-5-methylthiopentyl-1-phosphate (DK-MTP-1-P) into the intermediate 2-hydroxy-3-keto-5-methylthiopentenyl-1-phosphate (HK-MTPenyl-1-P), which is then dephosphorylated to form the acireductone 1,2-dihydroxy-3-keto-5-methylthiopentene (DHK-MTPene). This is Enolase-phosphatase E1 from Cronobacter sakazakii (strain ATCC BAA-894) (Enterobacter sakazakii).